The chain runs to 263 residues: Elongin-A (263 aa).

Disordered stretches follow at residues 112–147 (KLEQ…YCPK) and 170–263 (SATS…PKRI). Polar residues-rich tracts occupy residues 186–206 (RSSS…NTYP) and 214–229 (SFTS…VKTQ). Residues 230–245 (PSSSSSPSISRPTSFP) are compositionally biased toward low complexity. Residues 253-263 (SRFSSQVPKRI) show a composition bias toward polar residues.

It belongs to the ELA1 family. Heterodimer with elc1. Component of a CRL3 E3 ubiquitin ligase complex consisting of a cullin, the linker protein elc1, the substrate receptor pof4/ela1, and the RING protein rbx1. Interacts with skp1.

Functionally, as part of the CRL3 E3 ubiquitin ligase complex; polyubiquitylates monoubiquitylated RNA polymerase II subunit rpb1 to trigger its proteolysis; plays a role in global genomic repair. The polypeptide is Elongin-A (pof4) (Schizosaccharomyces pombe (strain 972 / ATCC 24843) (Fission yeast)).